Reading from the N-terminus, the 413-residue chain is Multifunctional CCA protein (413 aa).

ATP-binding residues include G8 and R11. Positions 8 and 11 each coordinate CTP. Residues E21 and D23 each contribute to the Mg(2+) site. R91, R137, and R140 together coordinate ATP. CTP is bound by residues R91, R137, and R140. An HD domain is found at T228–F329.

This sequence belongs to the tRNA nucleotidyltransferase/poly(A) polymerase family. Bacterial CCA-adding enzyme type 1 subfamily. In terms of assembly, monomer. Can also form homodimers and oligomers. Mg(2+) is required as a cofactor. The cofactor is Ni(2+).

It catalyses the reaction a tRNA precursor + 2 CTP + ATP = a tRNA with a 3' CCA end + 3 diphosphate. The enzyme catalyses a tRNA with a 3' CCA end + 2 CTP + ATP = a tRNA with a 3' CCACCA end + 3 diphosphate. In terms of biological role, catalyzes the addition and repair of the essential 3'-terminal CCA sequence in tRNAs without using a nucleic acid template. Adds these three nucleotides in the order of C, C, and A to the tRNA nucleotide-73, using CTP and ATP as substrates and producing inorganic pyrophosphate. tRNA 3'-terminal CCA addition is required both for tRNA processing and repair. Also involved in tRNA surveillance by mediating tandem CCA addition to generate a CCACCA at the 3' terminus of unstable tRNAs. While stable tRNAs receive only 3'-terminal CCA, unstable tRNAs are marked with CCACCA and rapidly degraded. The protein is Multifunctional CCA protein of Alkalilimnicola ehrlichii (strain ATCC BAA-1101 / DSM 17681 / MLHE-1).